A 21-amino-acid chain; its full sequence is Paulistine (21 aa).

Cys-7 and Cys-14 are joined by a disulfide. Position 21 is a threonine amide (Thr-21).

It belongs to the sylv/frat/paul family. Occurs in oxidized and reduced states which are thought to adopt a compact globular and linear structure, respectively.

Functionally, induces transient hyperalgesia and paw edema in mice. Probably exerts its effects via different pathways in an oxidation state-dependent way. The polypeptide is Paulistine (Polybia paulista (Neotropical social wasp)).